The sequence spans 375 residues: MSCPVIELTQQLIRRPSLSPDDAGCQALMIERLRAIGFTVEHMDFGDTQNFWAWRGQGETLAFAGHTDVVPAGDVDRWINPPFEPTIRDGMLFGRGAADMKGSLAAMVVAAERFVAQHPDHQGRLAFLITSDEEASAKNGTVKVVETLMARNERLDYCLVGEPSSTEIVGDVVKNGRRGSLTCNLTIHGVQGHVAYPHLADNPVHRAAPMLNELVAIEWDQGNEFFPATSMQIANIQAGTGSNNVIPGELFIQFNFRFSTELTDETLKERVHALLDKHQLRYTVDWWLSGQPFLTARGKLVDAVVNAIEHYNEIKPQLLTTGGTSDGRFIARMGAQVVELGPVNATIHKINECVNAADLQLLARMYQRIMEQLVA.

Residue histidine 66 coordinates Zn(2+). Residue aspartate 68 is part of the active site. Aspartate 99 is a binding site for Zn(2+). Glutamate 133 acts as the Proton acceptor in catalysis. Zn(2+) is bound by residues glutamate 134, glutamate 162, and histidine 348.

Belongs to the peptidase M20A family. DapE subfamily. Homodimer. The cofactor is Zn(2+). Co(2+) is required as a cofactor.

The catalysed reaction is N-succinyl-(2S,6S)-2,6-diaminopimelate + H2O = (2S,6S)-2,6-diaminopimelate + succinate. It participates in amino-acid biosynthesis; L-lysine biosynthesis via DAP pathway; LL-2,6-diaminopimelate from (S)-tetrahydrodipicolinate (succinylase route): step 3/3. Its function is as follows. Catalyzes the hydrolysis of N-succinyl-L,L-diaminopimelic acid (SDAP), forming succinate and LL-2,6-diaminopimelate (DAP), an intermediate involved in the bacterial biosynthesis of lysine and meso-diaminopimelic acid, an essential component of bacterial cell walls. The polypeptide is Succinyl-diaminopimelate desuccinylase (Citrobacter koseri (strain ATCC BAA-895 / CDC 4225-83 / SGSC4696)).